A 251-amino-acid chain; its full sequence is Insulin-induced gene 1 protein (251 aa).

Topologically, residues 1-58 are cytoplasmic; the sequence is MQTLEEHCWSCSCTRGRDKKGTRLSTWLAQRAAKAMSSLNSLLSLAYHTLASSEGRSL. A helical transmembrane segment spans residues 59–81; the sequence is IRRSLVLFAVGVFLALVLNLLQI. Over 82–100 the chain is Extracellular; sequence QRNVTLFPEEVIATIFSSA. A helical transmembrane segment spans residues 101–118; that stretch reads WWVPPCCGTAAAVVGLLY. The Cytoplasmic portion of the chain corresponds to 119–133; that stretch reads PCIDSHLGEPHKFKR. Residues 134–156 form a helical membrane-spanning segment; sequence EWASVMRCIAVFVGINHASAKLD. At 157-159 the chain is on the extracellular side; sequence FAN. Residues 160–178 traverse the membrane as a helical segment; that stretch reads NVQLSLTLAALSLGLWWTF. The Cytoplasmic segment spans residues 179–183; that stretch reads DRSRS. A helical transmembrane segment spans residues 184 to 205; sequence GLGLGITIAFLATLITQFLVYN. The Extracellular segment spans residues 206–219; it reads GVYQYTSPDFLYIR. The helical transmembrane segment at 220–237 threads the bilayer; that stretch reads SWLPCIFFSGGVTVGNIG. The Cytoplasmic portion of the chain corresponds to 238–251; the sequence is RQLAMGSSEKTHSD. A KxHxx motif is present at residues 245-251; that stretch reads SEKTHSD.

Belongs to the INSIG family. In terms of assembly, interacts with scap; interaction is direct and only takes place in the presence of sterols; it prevents interaction between scap and the coat protein complex II (COPII). Associates with the SCAP-SREBP complex; association is mediated via its interaction with scap and only takes place in the presence of sterols.

The protein localises to the endoplasmic reticulum membrane. Functionally, oxysterol-binding protein that mediates feedback control of cholesterol synthesis by controlling both endoplasmic reticulum to Golgi transport of scap and degradation of hmgcr. Acts as a negative regulator of cholesterol biosynthesis by mediating the retention of the SCAP-SREBP complex in the endoplasmic reticulum, thereby blocking the processing of sterol regulatory element-binding proteins (SREBPs). Binds oxysterol, including 25-hydroxycholesterol, regulating interaction with scap and retention of the SCAP-SREBP complex in the endoplasmic reticulum. In presence of oxysterol, interacts with scap, retaining the SCAP-SREBP complex in the endoplasmic reticulum, thereby preventing scap from escorting SREBPs to the Golgi. Sterol deprivation reduces oxysterol-binding, disrupting the interaction between insig1 and scap, thereby promoting Golgi transport of the SCAP-SREBP complex, followed by processing and nuclear translocation of SREBPs. Also regulates cholesterol synthesis by regulating degradation of hmgcr. In Xenopus tropicalis (Western clawed frog), this protein is Insulin-induced gene 1 protein.